The sequence spans 166 residues: Ribosome maturation factor RimM (166 aa).

Residues 91-163 (EDEFYEFQLI…KMQITPPEGW (73 aa)) enclose the PRC barrel domain.

The protein belongs to the RimM family. In terms of assembly, binds ribosomal protein uS19.

The protein localises to the cytoplasm. An accessory protein needed during the final step in the assembly of 30S ribosomal subunit, possibly for assembly of the head region. Essential for efficient processing of 16S rRNA. May be needed both before and after RbfA during the maturation of 16S rRNA. It has affinity for free ribosomal 30S subunits but not for 70S ribosomes. This is Ribosome maturation factor RimM from Sulfurihydrogenibium sp. (strain YO3AOP1).